The chain runs to 299 residues: MSDAEEEVVEYEEEQEEEDWSEEEEDEQEEAVEEEDGEAEPDPEGEAEAEEDKAEEVGPDEEARDAEDGPVEDSKPKPSRLFMPNLVPPKIPDGERVDFDDIHRKRMEKDLNELQTLIEAHFENRKKEEEELISLKDRIEKRRAERAEQQRIRNEREKERQNRLAEERARREEEENRRKAEDEARKKKALSNMMHFGGYIQKAQTERKSGKRQTEREKKKKILAERRKVLAIDHLNEDQLREKAKELWQSIHNLEAEKFDLQEKFKQQKYEINVLRNRINDNQKVSKTRGKAKVTGRWK.

A compositionally biased stretch (acidic residues) spans methionine 1–valine 71. 2 disordered regions span residues methionine 1 to valine 97 and aspartate 137 to lysine 220. Residue serine 2 is modified to N-acetylserine. Phosphoserine is present on serine 2. Basic and acidic residues-rich tracts occupy residues aspartate 137–arginine 185 and glutamine 204–lysine 220. At threonine 205 the chain carries Phosphothreonine; by PKC/PRKCA. The residue at position 209 (serine 209) is a Phosphoserine; by PKC/PRKCA. Threonine 214 is modified (phosphothreonine; by PKC/PRKCA and RAF1). Position 295 is a phosphothreonine; by PKC/PRKCA (threonine 295).

Belongs to the troponin T family. Post-translationally, phosphorylation at Thr-214 by PRKCA induces significant reduction in myofilament calcium sensitivity and actomyosin ATPase activity.

In terms of biological role, troponin T is the tropomyosin-binding subunit of troponin, the thin filament regulatory complex which confers calcium-sensitivity to striated muscle actomyosin ATPase activity. This Rattus norvegicus (Rat) protein is Troponin T, cardiac muscle (Tnnt2).